The primary structure comprises 193 residues: Peptidyl-tRNA hydrolase (193 aa).

His-17 serves as a coordination point for tRNA. His-22 functions as the Proton acceptor in the catalytic mechanism. 3 residues coordinate tRNA: Phe-68, Asn-70, and Asn-116.

It belongs to the PTH family. Monomer.

It is found in the cytoplasm. It catalyses the reaction an N-acyl-L-alpha-aminoacyl-tRNA + H2O = an N-acyl-L-amino acid + a tRNA + H(+). Hydrolyzes ribosome-free peptidyl-tRNAs (with 1 or more amino acids incorporated), which drop off the ribosome during protein synthesis, or as a result of ribosome stalling. Functionally, catalyzes the release of premature peptidyl moieties from peptidyl-tRNA molecules trapped in stalled 50S ribosomal subunits, and thus maintains levels of free tRNAs and 50S ribosomes. The protein is Peptidyl-tRNA hydrolase of Xanthomonas campestris pv. campestris (strain ATCC 33913 / DSM 3586 / NCPPB 528 / LMG 568 / P 25).